We begin with the raw amino-acid sequence, 403 residues long: uncharacterized protein (403 aa).

Transmembrane regions (helical) follow at residues 31–51 (FLIATIIGPLIIIALAIIGSF), 186–206 (LPIGFVFLLYMAISSLSGIIV), 238–258 (ISAVGLLQIGIWVLFALPIII), 268–288 (LAIFALIYFVLGYLFYSSLLC), 303–323 (LISPIIIIQIIPIMFMNTIMV), and 355–375 (LIEIVLSTAIMIVSIVISFIL).

To B.subtilis YhaP.

The protein resides in the cell membrane. This is an uncharacterized protein from Methanocaldococcus jannaschii (strain ATCC 43067 / DSM 2661 / JAL-1 / JCM 10045 / NBRC 100440) (Methanococcus jannaschii).